The chain runs to 545 residues: tRNA-2-methylthio-N(6)-dimethylallyladenosine synthase (545 aa).

The interval 1-32 is disordered; sequence MSSASPLARCCDEATPSAGPRAAQPPYHGPVT. The 117-residue stretch at 58-174 folds into the MTTase N-terminal domain; sequence RTYQVRTYGC…LPTLLERARH (117 aa). [4Fe-4S] cluster-binding residues include C67, C103, C137, C211, C215, and C218. The Radical SAM core domain maps to 197–433; the sequence is RESAYAAWVS…IALQEQISLE (237 aa). One can recognise a TRAM domain in the interval 436–504; sequence RALVGQAVEV…PHHLIADAGV (69 aa).

The protein belongs to the methylthiotransferase family. MiaB subfamily. In terms of assembly, monomer. The cofactor is [4Fe-4S] cluster.

It is found in the cytoplasm. It carries out the reaction N(6)-dimethylallyladenosine(37) in tRNA + (sulfur carrier)-SH + AH2 + 2 S-adenosyl-L-methionine = 2-methylsulfanyl-N(6)-dimethylallyladenosine(37) in tRNA + (sulfur carrier)-H + 5'-deoxyadenosine + L-methionine + A + S-adenosyl-L-homocysteine + 2 H(+). Its function is as follows. Catalyzes the methylthiolation of N6-(dimethylallyl)adenosine (i(6)A), leading to the formation of 2-methylthio-N6-(dimethylallyl)adenosine (ms(2)i(6)A) at position 37 in tRNAs that read codons beginning with uridine. The protein is tRNA-2-methylthio-N(6)-dimethylallyladenosine synthase of Mycobacterium bovis (strain BCG / Pasteur 1173P2).